Consider the following 446-residue polypeptide: Putative zinc metalloprotease NMA0084 (446 aa).

Histidine 18 lines the Zn(2+) pocket. Glutamate 19 is an active-site residue. Histidine 22 lines the Zn(2+) pocket. 3 helical membrane passes run 93-115 (IAIV…GLSF), 376-398 (FLAL…LDGG), and 419-438 (NIGL…VAFF). Positions 100–181 (PLTNLALAVL…KVAVGVQTAS (82 aa)) constitute a PDZ domain.

This sequence belongs to the peptidase M50B family. It depends on Zn(2+) as a cofactor.

The protein resides in the cell inner membrane. This is Putative zinc metalloprotease NMA0084 from Neisseria meningitidis serogroup A / serotype 4A (strain DSM 15465 / Z2491).